A 103-amino-acid chain; its full sequence is Large ribosomal subunit protein uL24 (103 aa).

The protein belongs to the universal ribosomal protein uL24 family. As to quaternary structure, part of the 50S ribosomal subunit.

Functionally, one of two assembly initiator proteins, it binds directly to the 5'-end of the 23S rRNA, where it nucleates assembly of the 50S subunit. In terms of biological role, one of the proteins that surrounds the polypeptide exit tunnel on the outside of the subunit. This chain is Large ribosomal subunit protein uL24, found in Bacillus cytotoxicus (strain DSM 22905 / CIP 110041 / 391-98 / NVH 391-98).